We begin with the raw amino-acid sequence, 272 residues long: Small ribosomal subunit protein mS23 (272 aa).

A disordered region spans residues 233 to 272 (KENASKAAGDASAVSSEKQVEDDVVNFDESTDADQEVLHF). The span at 252-272 (VEDDVVNFDESTDADQEVLHF) shows a compositional bias: acidic residues.

The protein belongs to the mitochondrion-specific ribosomal protein mS23 family. In terms of assembly, component of the mitochondrial small ribosomal subunit.

Its subcellular location is the mitochondrion. The sequence is that of Small ribosomal subunit protein mS23 (RSM25) from Candida glabrata (strain ATCC 2001 / BCRC 20586 / JCM 3761 / NBRC 0622 / NRRL Y-65 / CBS 138) (Yeast).